Here is a 423-residue protein sequence, read N- to C-terminus: Serine--tRNA ligase (423 aa).

Basic and acidic residues-rich tracts occupy residues 1-24 (MIDL…RGED) and 62-71 (KMRDASPEEK). The tract at residues 1–71 (MIDLKQLRDD…KMRDASPEEK (71 aa)) is disordered. 230–232 (TSE) lines the L-serine pocket. ATP contacts are provided by residues 261-263 (RRE) and Val277. An L-serine-binding site is contributed by Glu284. 348–351 (ELTS) is an ATP binding site. L-serine is bound at residue Thr383.

It belongs to the class-II aminoacyl-tRNA synthetase family. Type-1 seryl-tRNA synthetase subfamily. Homodimer. The tRNA molecule binds across the dimer.

It localises to the cytoplasm. It catalyses the reaction tRNA(Ser) + L-serine + ATP = L-seryl-tRNA(Ser) + AMP + diphosphate + H(+). The catalysed reaction is tRNA(Sec) + L-serine + ATP = L-seryl-tRNA(Sec) + AMP + diphosphate + H(+). Its pathway is aminoacyl-tRNA biosynthesis; selenocysteinyl-tRNA(Sec) biosynthesis; L-seryl-tRNA(Sec) from L-serine and tRNA(Sec): step 1/1. In terms of biological role, catalyzes the attachment of serine to tRNA(Ser). Is also able to aminoacylate tRNA(Sec) with serine, to form the misacylated tRNA L-seryl-tRNA(Sec), which will be further converted into selenocysteinyl-tRNA(Sec). The sequence is that of Serine--tRNA ligase from Corynebacterium kroppenstedtii (strain DSM 44385 / JCM 11950 / CIP 105744 / CCUG 35717).